A 212-amino-acid polypeptide reads, in one-letter code: Deoxyribose-phosphate aldolase (212 aa).

D89 serves as the catalytic Proton donor/acceptor. Residue K151 is the Schiff-base intermediate with acetaldehyde of the active site. Catalysis depends on K180, which acts as the Proton donor/acceptor.

This sequence belongs to the DeoC/FbaB aldolase family. DeoC type 1 subfamily.

It is found in the cytoplasm. The catalysed reaction is 2-deoxy-D-ribose 5-phosphate = D-glyceraldehyde 3-phosphate + acetaldehyde. Its pathway is carbohydrate degradation; 2-deoxy-D-ribose 1-phosphate degradation; D-glyceraldehyde 3-phosphate and acetaldehyde from 2-deoxy-alpha-D-ribose 1-phosphate: step 2/2. In terms of biological role, catalyzes a reversible aldol reaction between acetaldehyde and D-glyceraldehyde 3-phosphate to generate 2-deoxy-D-ribose 5-phosphate. This chain is Deoxyribose-phosphate aldolase, found in Clostridium botulinum (strain Langeland / NCTC 10281 / Type F).